The following is a 430-amino-acid chain: Enolase (430 aa).

Q168 serves as a coordination point for (2R)-2-phosphoglycerate. E210 (proton donor) is an active-site residue. Residues D247, E288, and D315 each contribute to the Mg(2+) site. 4 residues coordinate (2R)-2-phosphoglycerate: K340, R369, S370, and K391. The Proton acceptor role is filled by K340.

Belongs to the enolase family. It depends on Mg(2+) as a cofactor.

The protein localises to the cytoplasm. Its subcellular location is the secreted. It is found in the cell surface. The catalysed reaction is (2R)-2-phosphoglycerate = phosphoenolpyruvate + H2O. It functions in the pathway carbohydrate degradation; glycolysis; pyruvate from D-glyceraldehyde 3-phosphate: step 4/5. In terms of biological role, catalyzes the reversible conversion of 2-phosphoglycerate (2-PG) into phosphoenolpyruvate (PEP). It is essential for the degradation of carbohydrates via glycolysis. The chain is Enolase from Rippkaea orientalis (strain PCC 8801 / RF-1) (Cyanothece sp. (strain PCC 8801)).